A 517-amino-acid polypeptide reads, in one-letter code: Membrane-bound lytic murein transglycosylase F (517 aa).

Residues 1–32 (MKKFKINYLLIGIVTLLLAAALWPSIPWFGKA) form the signal peptide. The interval 33–269 (ENRIAAIQSR…RLEEKYLGHG (237 aa)) is non-LT domain. The interval 270–517 (GDFDYVDTRS…PNTLVQAPRR (248 aa)) is LT domain. Glu-314 is an active-site residue.

This sequence in the N-terminal section; belongs to the bacterial solute-binding protein 3 family. It in the C-terminal section; belongs to the transglycosylase Slt family.

It is found in the cell outer membrane. It catalyses the reaction Exolytic cleavage of the (1-&gt;4)-beta-glycosidic linkage between N-acetylmuramic acid (MurNAc) and N-acetylglucosamine (GlcNAc) residues in peptidoglycan, from either the reducing or the non-reducing ends of the peptidoglycan chains, with concomitant formation of a 1,6-anhydrobond in the MurNAc residue.. Functionally, murein-degrading enzyme that degrades murein glycan strands and insoluble, high-molecular weight murein sacculi, with the concomitant formation of a 1,6-anhydromuramoyl product. Lytic transglycosylases (LTs) play an integral role in the metabolism of the peptidoglycan (PG) sacculus. Their lytic action creates space within the PG sacculus to allow for its expansion as well as for the insertion of various structures such as secretion systems and flagella. This Enterobacter sp. (strain 638) protein is Membrane-bound lytic murein transglycosylase F.